The chain runs to 447 residues: Ribulose bisphosphate carboxylase large chain (447 aa).

Positions 89 and 139 each coordinate substrate. Residue Lys141 is the Proton acceptor of the active site. Lys143 provides a ligand contact to substrate. Positions 167, 169, and 170 each coordinate Mg(2+). The residue at position 167 (Lys167) is an N6-carboxylysine. His260 (proton acceptor) is an active-site residue. Residues Arg261, His293, and Ser345 each contribute to the substrate site.

Belongs to the RuBisCO large chain family. Type I subfamily. Heterohexadecamer of 8 large chains and 8 small chains; disulfide-linked. The disulfide link is formed within the large subunit homodimers. The cofactor is Mg(2+). Post-translationally, the disulfide bond which can form in the large chain dimeric partners within the hexadecamer appears to be associated with oxidative stress and protein turnover.

It localises to the plastid. The protein localises to the chloroplast. It carries out the reaction 2 (2R)-3-phosphoglycerate + 2 H(+) = D-ribulose 1,5-bisphosphate + CO2 + H2O. The enzyme catalyses D-ribulose 1,5-bisphosphate + O2 = 2-phosphoglycolate + (2R)-3-phosphoglycerate + 2 H(+). Its function is as follows. RuBisCO catalyzes two reactions: the carboxylation of D-ribulose 1,5-bisphosphate, the primary event in carbon dioxide fixation, as well as the oxidative fragmentation of the pentose substrate in the photorespiration process. Both reactions occur simultaneously and in competition at the same active site. The polypeptide is Ribulose bisphosphate carboxylase large chain (Ligustrum vulgare (Common privet)).